The sequence spans 209 residues: MPKGILGKKIGMTQIFNEAGVAIPVTVVEAGPCLVVQKRTPENDGYSAIQLGFGVKRENLLNKPTKGHLNKAGVRPVRFLRELKVDDLEAFQVGQEIKADIFAEGEKVDVVGTSKGKGFAGGIKRHNFHRGPMAHGSKYHRRPGSSAAKGPARTFKGRKLPGHYGVERVTVQNLQVVKVDPERNLLAIKGAVPGPRGGLLLVKNSVKVK.

Positions 121 to 154 (GGIKRHNFHRGPMAHGSKYHRRPGSSAAKGPART) are disordered.

The protein belongs to the universal ribosomal protein uL3 family. As to quaternary structure, part of the 50S ribosomal subunit. Forms a cluster with proteins L14 and L19.

Its function is as follows. One of the primary rRNA binding proteins, it binds directly near the 3'-end of the 23S rRNA, where it nucleates assembly of the 50S subunit. The sequence is that of Large ribosomal subunit protein uL3 from Desulforamulus reducens (strain ATCC BAA-1160 / DSM 100696 / MI-1) (Desulfotomaculum reducens).